The primary structure comprises 126 residues: Ribonuclease P protein component (126 aa).

This sequence belongs to the RnpA family. As to quaternary structure, consists of a catalytic RNA component (M1 or rnpB) and a protein subunit.

It carries out the reaction Endonucleolytic cleavage of RNA, removing 5'-extranucleotides from tRNA precursor.. Its function is as follows. RNaseP catalyzes the removal of the 5'-leader sequence from pre-tRNA to produce the mature 5'-terminus. It can also cleave other RNA substrates such as 4.5S RNA. The protein component plays an auxiliary but essential role in vivo by binding to the 5'-leader sequence and broadening the substrate specificity of the ribozyme. This chain is Ribonuclease P protein component, found in Synechococcus sp. (strain JA-3-3Ab) (Cyanobacteria bacterium Yellowstone A-Prime).